The sequence spans 334 residues: Protein POLAR-like 1 (334 aa).

Over residues 53 to 63 (IRTSSEDDHHR) the composition is skewed to basic and acidic residues. Positions 53 to 74 (IRTSSEDDHHRVGQFSDSPPPT) are disordered. Positions 273 to 300 (ETRQQEEIKELEIALDDAKQRLHLKETE) form a coiled coil.

Its subcellular location is the cytoplasm. The protein resides in the cell cortex. In terms of biological role, acts as a stomatal lineage scaffold which regulates subcellular localization and transient polarization of kinases (e.g. ASK7/BIN2 and ASK3/SK12) involved in asymmetric cell division (ACD) in a BASL-dependent manner. This chain is Protein POLAR-like 1, found in Arabidopsis thaliana (Mouse-ear cress).